A 722-amino-acid polypeptide reads, in one-letter code: MTMFKKAVKSFQWGTYQVTMETGEIARQAGGAVIVNVDDTVVMGTVVASKSAKPGQSFFPLTVDYLEKTYAAGKIPGGFFRREGRPSEGETLISRLIDRPLRPLFPEGFLNEVQVVVHVLSINPDVPSDIPALIAASAALAVSSIPFAGPVGAARVGYANGQYLLNPTRTEQATSELDLIVAGTQAAVLMVESEANQLSEEVMLGAVVYGHDQMQTAINAINDLVCEAGKPEWDWTAAPKDEPFIAKVTALAEAPLREAYQIRQKGARSDKLKEISKEVMAKLSEEGDVDAVAVSDIMFEIEAKIVRSQILNGEPRIDGRDTRTVRPIEIRNGVLPRTHGSALFTRGETQALVVATLGTARDEQIIDVLEGEYRDRFMFHYNMPPFATGETGRVGSPKRREIGHGRLAKRALIPVLPSAEDFAYSIRVVSEITESNGSSSMASVCGGCLAMMDAGVPVKAHVAGVAMGLILDGNRFAVLTDILGDEDHLGDMDFKVAGTANGITALQMDIKVQGITKEIMQVALAQAKEGRLHILSKMQEAMGSVRTELSAHAPRMVSFKIHPDKIREVIGKGGATIQALTKETGCSIDIKDDGTVTIASTSAEGMAEAKARIEGITAEAEVGKIYEGPVVKLLEFGALVNILPGKDGLLHISEISNERVKEVKDYLAEGQVVRVKLLAADERGRLRLSLKAAMADEGGTIAPLAGAAEVATEAAPATGESA.

Positions 487 and 493 each coordinate Mg(2+). Residues 554–613 (PRMVSFKIHPDKIREVIGKGGATIQALTKETGCSIDIKDDGTVTIASTSAEGMAEAKARI) enclose the KH domain. One can recognise an S1 motif domain in the interval 623-691 (GKIYEGPVVK…ERGRLRLSLK (69 aa)).

This sequence belongs to the polyribonucleotide nucleotidyltransferase family. Requires Mg(2+) as cofactor.

The protein resides in the cytoplasm. It catalyses the reaction RNA(n+1) + phosphate = RNA(n) + a ribonucleoside 5'-diphosphate. Functionally, involved in mRNA degradation. Catalyzes the phosphorolysis of single-stranded polyribonucleotides processively in the 3'- to 5'-direction. The sequence is that of Polyribonucleotide nucleotidyltransferase from Polynucleobacter necessarius subsp. necessarius (strain STIR1).